A 2052-amino-acid polypeptide reads, in one-letter code: Unconventional myosin-X (2052 aa).

The residue at position 1 (Met1) is an N-acetylmethionine. The 677-residue stretch at 63–739 folds into the Myosin motor domain; the sequence is EGVDDMATLT…LEQKLEKRQE (677 aa). ATP contacts are provided by residues Asn104, Tyr113, 160–165, and Asn215; that span reads GAGKTE. Residues 619–641 form an actin-binding region; it reads LHSLMATLSASNPFFVRCIKPNM. 3 IQ domains span residues 742 to 763, 764 to 787, and 788 to 817; these read VTRA…KQYK, KVLD…RFLH, and LKKA…EKRA. Positions 814–884 are SAH; that stretch reads EKRAEEEKRK…LSRELEKQKE (71 aa). The segment at 819 to 843 is disordered; it reads EEKRKREEEEKRKREEEERERERER. The stretch at 885–935 forms a coiled coil; sequence NKQVEEILRLEKEIEDLQRMKERQELSLTEASLQKLQQLRDEELRRLEDEA. 2 positions are modified to phosphoserine: Ser963 and Ser966. The tract at residues 964 to 1093 is disordered; sequence VGSGCTGEQG…DYDQDDYEDG (130 aa). Acidic residues predominate over residues 988–1003; the sequence is PEEEEVDEGFEADDDA. Polar residues predominate over residues 1040–1049; it reads VVPTSPSADS. The span at 1081-1092 shows a compositional bias: acidic residues; the sequence is GDYDYDQDDYED. Phosphothreonine is present on Thr1152. 2 PH domains span residues 1206–1304 and 1386–1491; these read EALK…QVHA and EFIV…NVTD. In terms of domain architecture, MyTH4 spans 1541–1689; that stretch reads LPYGDINLNL…PSRDEIEALI (149 aa). One can recognise an FERM domain in the interval 1694 to 2038; sequence MTSTVHCHGG…AYISMIVKKR (345 aa).

The protein belongs to the TRAFAC class myosin-kinesin ATPase superfamily. Myosin family. In terms of assembly, monomer, when in an inactive conformation in the cytosol. Homodimer in its active, membrane-bound conformation; antiparallel coiled coil-mediated dimer formation. Interacts with ECPAS. Interacts with NEO 1. Interacts with VASP. Interacts with DCC and ITGB5; the presence of DCC inhibits ITGB5 binding. Interacts with tubulin; ITGB5 or DCC binding inhibits tubulin binding. Interacts strongly with CALM3 and weakly with CALM, the CALM3 interaction is essential for function in filopodial extension and motility. Interacts with ITGB1, ITGB3 and ITGB5. In terms of tissue distribution, detected in kidney, testis, liver, kidney, cerebellum and brain cortex (at protein level).

It localises to the cytoplasm. The protein resides in the cytosol. Its subcellular location is the cell projection. It is found in the lamellipodium. The protein localises to the ruffle. It localises to the cytoskeleton. The protein resides in the filopodium tip. Its subcellular location is the cell cortex. It is found in the filopodium membrane. In terms of biological role, myosins are actin-based motor molecules with ATPase activity. Unconventional myosins serve in intracellular movements. MYO10 binds to actin filaments and actin bundles and functions as a plus end-directed motor. Moves with higher velocity and takes larger steps on actin bundles than on single actin filaments. The tail domain binds to membranous compartments containing phosphatidylinositol 3,4,5-trisphosphate, which are then moved relative to actin filaments. Regulates cell shape, cell spreading and cell adhesion. Stimulates the formation and elongation of filopodia. In hippocampal neurons it induces the formation of dendritic filopodia by trafficking the actin-remodeling protein VASP to the tips of filopodia, where it promotes actin elongation. Plays a role in formation of the podosome belt in osteoclasts. The protein is Unconventional myosin-X (MYO10) of Bos taurus (Bovine).